The following is a 260-amino-acid chain: Centromere protein K (260 aa).

A coiled-coil region spans residues 84–173; that stretch reads EEELQKVKKE…KKLMNALGEF (90 aa).

The protein belongs to the CENP-K/MCM22 family. In terms of assembly, component of the CENPA-HI complex, at least composed of CENPH, CENPI, CENPK, CENPL, CENPM, CENPO and CENPP.

It is found in the nucleus. It localises to the chromosome. The protein resides in the centromere. The protein localises to the kinetochore. In terms of biological role, component of the CENPA-HI complex, a centromeric complex involved in assembly of kinetochore proteins, mitotic progression and chromosome segregation. In Gallus gallus (Chicken), this protein is Centromere protein K (CENPK).